Reading from the N-terminus, the 421-residue chain is ATP-dependent RNA helicase RhlB (421 aa).

A Q motif motif is present at residues 9-37; the sequence is QKFSDFALHPKVVEALEKKGFHNCTPIQA. In terms of domain architecture, Helicase ATP-binding spans 40 to 219; the sequence is LPLTLAGRDV…FEQMNNAEYI (180 aa). 53–60 contributes to the ATP binding site; the sequence is AQTGTGKT. The DEAD box signature appears at 165-168; that stretch reads DEAD. The Helicase C-terminal domain maps to 245 to 390; the sequence is RLLQTLIEEE…VSKYNPDALM (146 aa). The interval 395 to 421 is disordered; it reads KPLRLTRARTGNGPRRTGAPRNRRRSG. A compositionally biased stretch (low complexity) spans 402–414; it reads ARTGNGPRRTGAP.

The protein belongs to the DEAD box helicase family. RhlB subfamily. As to quaternary structure, component of the RNA degradosome, which is a multiprotein complex involved in RNA processing and mRNA degradation.

It is found in the cytoplasm. It carries out the reaction ATP + H2O = ADP + phosphate + H(+). DEAD-box RNA helicase involved in RNA degradation. Has RNA-dependent ATPase activity and unwinds double-stranded RNA. The sequence is that of ATP-dependent RNA helicase RhlB from Shigella flexneri serotype 5b (strain 8401).